Consider the following 369-residue polypeptide: tRNA(Met) cytidine acetate ligase (369 aa).

ATP-binding positions include 7 to 20 (VAEF…HKYL), glycine 96, asparagine 152, and arginine 175.

Belongs to the TmcAL family.

The protein localises to the cytoplasm. It catalyses the reaction cytidine(34) in elongator tRNA(Met) + acetate + ATP = N(4)-acetylcytidine(34) in elongator tRNA(Met) + AMP + diphosphate. In terms of biological role, catalyzes the formation of N(4)-acetylcytidine (ac(4)C) at the wobble position of elongator tRNA(Met), using acetate and ATP as substrates. First activates an acetate ion to form acetyladenylate (Ac-AMP) and then transfers the acetyl group to tRNA to form ac(4)C34. The chain is tRNA(Met) cytidine acetate ligase from Streptococcus agalactiae serotype Ia (strain ATCC 27591 / A909 / CDC SS700).